The sequence spans 291 residues: uncharacterized protein (291 aa).

A disordered region spans residues 77-140; that stretch reads TVPQSSPTAI…PPTPVVEKSP (64 aa). Pro residues predominate over residues 125-134; sequence PVTPAHPPTP.

This is an uncharacterized protein from Synechocystis sp. (strain ATCC 27184 / PCC 6803 / Kazusa).